A 604-amino-acid chain; its full sequence is Beta-(1--&gt;2)glucan export ATP-binding/permease protein NdvA (604 aa).

Residues 21–311 enclose the ABC transmembrane type-1 domain; it reads GWILAFANLL…VVSFINSVFM (291 aa). 6 helical membrane passes run 22–42, 68–88, 146–166, 168–188, 238–258, and 285–305; these read WILA…PVLF, LLGA…AVAL, EHFA…YINW, LAIL…LVVH, LLAL…ITRA, and IVMF…VVSF. The ABC transporter domain maps to 345–579; it reads VEFKDVSFSY…QGHFAALARA (235 aa). An ATP-binding site is contributed by 378-385; sequence GATGAGKS.

It belongs to the ABC transporter superfamily. Beta-(1--&gt;2)glucan exporter (TC 3.A.1.108.1) family. In terms of assembly, homodimer.

It is found in the cell inner membrane. The enzyme catalyses [(1-&gt;2)-beta-D-glucosyl](n)(in) + ATP + H2O = [(1-&gt;2)-beta-D-glucosyl](n)(out) + ADP + phosphate + H(+). Involved in beta-(1--&gt;2)glucan export. Transmembrane domains (TMD) form a pore in the inner membrane and the ATP-binding domain (NBD) is responsible for energy generation. This chain is Beta-(1--&gt;2)glucan export ATP-binding/permease protein NdvA, found in Rhodopseudomonas palustris (strain BisB18).